The sequence spans 264 residues: Putative hydro-lyase Cgl2544/cg2803 (264 aa).

It belongs to the D-glutamate cyclase family.

The polypeptide is Putative hydro-lyase Cgl2544/cg2803 (Corynebacterium glutamicum (strain ATCC 13032 / DSM 20300 / JCM 1318 / BCRC 11384 / CCUG 27702 / LMG 3730 / NBRC 12168 / NCIMB 10025 / NRRL B-2784 / 534)).